The primary structure comprises 501 residues: MSNFPWLTTIVLLPVFAGCVIPFFPNKGNNLIRWYTLGVCLLEFLLITYVFCYYFKFDDPIIQLKEDYNWIDFLDFHWRLGIDGLSIGLILLTGFITTLATLAAWPVTRNPRLFYFLMLAMYSGQVGLFASQDILLFFFMWELELIPVYLLLCIWGGKRRLYATTKFILYTAGGSIFILMGALTMGFYGSNQLTLDFQNLSNKSYPLELEIILYLGFFIAYAVKLPIFPLHTWLPDTHGEAHYSTCMLLAGILLKMGGYGLIRINMELLPHAHSIFAPWIVAVGAIQIVYAALISFSQRNLKRRIAYSSISHMGFVLIGIGSMTDVGLNGAILQMVSHGLIGAALFFLAGITYDRTRTLFLDQMGGTAIYMPKIFTMFSSFSMASLALPGMSGFVAEFLVFLGIVVSNKYSFNFKILVTIIEAIGIILTPIYLLSMLRQMFYGYKFSKFTTFSNSNMDAGPREIFILVCLIFPIVGIGLYPNSVLSLWNSKVSFILSKFIV.

14 consecutive transmembrane segments (helical) span residues Phe4 to Phe24, Tyr35 to Phe55, Ile87 to Val107, Leu113 to Asp133, Ile134 to Ile154, Phe167 to Phe187, Ile211 to His231, His242 to Ile262, Ser274 to Ile294, Ile310 to Gly330, Ala331 to Ile351, Leu386 to Val406, Ile416 to Met436, and Ile464 to Val484.

This sequence belongs to the complex I subunit 4 family.

Its subcellular location is the plastid. The protein resides in the chloroplast thylakoid membrane. It carries out the reaction a plastoquinone + NADH + (n+1) H(+)(in) = a plastoquinol + NAD(+) + n H(+)(out). The enzyme catalyses a plastoquinone + NADPH + (n+1) H(+)(in) = a plastoquinol + NADP(+) + n H(+)(out). In Physcomitrium patens (Spreading-leaved earth moss), this protein is NAD(P)H-quinone oxidoreductase chain 4, chloroplastic.